Reading from the N-terminus, the 207-residue chain is Small ribosomal subunit protein uS4 (207 aa).

The S4 RNA-binding domain occupies 97-160 (SRLDNVVYRM…KKQARIVEAL (64 aa)).

Belongs to the universal ribosomal protein uS4 family. Part of the 30S ribosomal subunit. Contacts protein S5. The interaction surface between S4 and S5 is involved in control of translational fidelity.

One of the primary rRNA binding proteins, it binds directly to 16S rRNA where it nucleates assembly of the body of the 30S subunit. In terms of biological role, with S5 and S12 plays an important role in translational accuracy. The chain is Small ribosomal subunit protein uS4 from Burkholderia mallei (strain NCTC 10247).